Reading from the N-terminus, the 530-residue chain is Putative sulfate transporter YvdB (530 aa).

10 helical membrane-spanning segments follow: residues 19–39, 41–61, 68–88, 91–111, 121–141, 164–184, 192–212, 241–261, 313–333, and 384–404; these read LIAGIVVGVVAIPLGMAFAIA, GVEPEYGLYTVVIAGICISLF, IGGPTGAFVPILFGIIMQYGL, LLIAGFMAGVMLVLFGLFKLG, VIVGFTAGIAVLIFTEQIANF, LGTFNVYAILTAVIGLVILLV, VPGALLALLISTVVAVVFFPD, MVMLFPAALVIALLGGLESIL, AVSPVSGVVHGVVVLLVLLVF, and VLFDLIIGVATGLLLAFVFFI. Residues 420–530 form the STAS domain; it reads PVLAKREDPS…FFDHHDEITG (111 aa).

It belongs to the SLC26A/SulP transporter (TC 2.A.53) family.

It is found in the cell membrane. This Bacillus subtilis (strain 168) protein is Putative sulfate transporter YvdB (yvdB).